A 205-amino-acid chain; its full sequence is Large ribosomal subunit protein bL25 (205 aa).

The interval 180–205 (HEEVAEEAEETEGEDAEEAPAAEGEE) is disordered. Over residues 183 to 205 (VAEEAEETEGEDAEEAPAAEGEE) the composition is skewed to acidic residues.

The protein belongs to the bacterial ribosomal protein bL25 family. CTC subfamily. As to quaternary structure, part of the 50S ribosomal subunit; part of the 5S rRNA/L5/L18/L25 subcomplex. Contacts the 5S rRNA. Binds to the 5S rRNA independently of L5 and L18.

In terms of biological role, this is one of the proteins that binds to the 5S RNA in the ribosome where it forms part of the central protuberance. The sequence is that of Large ribosomal subunit protein bL25 from Corynebacterium diphtheriae (strain ATCC 700971 / NCTC 13129 / Biotype gravis).